The sequence spans 426 residues: Stationary phase-inducible protein CsiE (426 aa).

PRD domains follow at residues 120–225 (ARNF…DPLR) and 229–336 (QRDR…ENDL).

In Escherichia coli (strain K12), this protein is Stationary phase-inducible protein CsiE (csiE).